A 122-amino-acid chain; its full sequence is Yop proteins translocation protein X (122 aa).

The stretch at 71–87 (HRAQDYRRELDTLQSLL) forms a coiled coil.

As to quaternary structure, interacts with YscY.

The protein resides in the secreted. Its function is as follows. Required for Yop secretion. This Yersinia enterocolitica serotype O:8 / biotype 1B (strain NCTC 13174 / 8081) protein is Yop proteins translocation protein X (yscX).